The following is a 293-amino-acid chain: Short-chain dehydrogenase/reductase PhomF (293 aa).

2 residues coordinate NADP(+): Ile-31 and Asn-102. Catalysis depends on Ser-175, which acts as the Proton donor. Tyr-190, Lys-194, and Ser-225 together coordinate NADP(+). The active-site Proton acceptor is the Tyr-190. Catalysis depends on Lys-194, which acts as the Lowers pKa of active site Tyr.

The protein belongs to the short-chain dehydrogenases/reductases (SDR) family.

Short-chain dehydrogenase/reductase; part of the gene cluster that mediates the biosynthesis of the phomopsins, a group of hexapeptide mycotoxins which infects lupins and causes lupinosis disease in livestock. The role of phomF within the phomopsins biosynthesis pathway has still to be determined. The pathway starts with the processing of the precursor phomA by several endopeptidases including kexin proteases as well as the cluster-specific S41 family peptidase phomP1 and the oligopeptidase phomG to produce 10 identical copies of the hexapeptide Tyr-Val-Ile-Pro-Ile-Asp. After being excised from the precursor peptide, the core peptides are cyclized and modified post-translationally by enzymes encoded within the gene cluster. The timing and order of proteolysis of the phomA precursor and PTMs are still unknown. Two tyrosinase-like enzymes, phomQ1 and phomQ2, catalyze the chlorination and hydroxylation of Tyr, respectively. PhomYb, is proposed to be involved in the construction of the macrocyclic structure. The other 4 ustYa family proteins may be involved in PTMs that generate the unique structure of phomopsin A. PhomYa is required for the hydroxylation of C-beta of Tyr. PhomYc, phomYd, and phomYe are responsible for the biosynthesis of 2,3-dehydroisoleucine (dIle), 2,3-dehydroaspartic acid (dAsp), and 3,4-dehydroproline (dPro), respectively. While dIle formation by phomYc is indispensable for the installation of dAsp by phomYd, the order of the other PTMs have not been elucidated yet. Most of the biosynthetic enzymes likely have broad substrate specificity, and thus, there might be a metabolic grid from a precursor to phomopsin A. The enzyme(s) responsible for the biosynthesis of 3,4-dehydrovaline (dVal) have also not been identified yet. Finally, phomM acts as an S-adenosylmethionine-dependent alpha-N-methyltransferase that catalyzes two successive N-methylation reactions, converting N-desmethyl-phomopsin A to phomopsin A and phomopsin A further to an N,N-dimethylated congener called phomopsin E. The sequence is that of Short-chain dehydrogenase/reductase PhomF from Diaporthe leptostromiformis (Lupinosis disease fungus).